The chain runs to 477 residues: Probable cytosolic Fe-S cluster assembly factor GK14772 (477 aa).

[4Fe-4S] cluster is bound by residues Cys-23, Cys-69, Cys-72, Cys-75, Cys-188, Cys-244, Cys-396, and Cys-400.

It belongs to the NARF family.

In terms of biological role, component of the cytosolic iron-sulfur (Fe/S) protein assembly machinery. Required for maturation of extramitochondrial Fe/S proteins. In Drosophila willistoni (Fruit fly), this protein is Probable cytosolic Fe-S cluster assembly factor GK14772.